Here is a 261-residue protein sequence, read N- to C-terminus: Methionine aminopeptidase (261 aa).

His-78 serves as a coordination point for substrate. 3 residues coordinate a divalent metal cation: Asp-96, Asp-107, and His-170. His-177 serves as a coordination point for substrate. Residues Glu-202 and Glu-233 each contribute to the a divalent metal cation site.

The protein belongs to the peptidase M24A family. Methionine aminopeptidase type 1 subfamily. As to quaternary structure, monomer. Co(2+) is required as a cofactor. It depends on Zn(2+) as a cofactor. The cofactor is Mn(2+). Fe(2+) serves as cofactor.

It carries out the reaction Release of N-terminal amino acids, preferentially methionine, from peptides and arylamides.. In terms of biological role, removes the N-terminal methionine from nascent proteins. The N-terminal methionine is often cleaved when the second residue in the primary sequence is small and uncharged (Met-Ala-, Cys, Gly, Pro, Ser, Thr, or Val). Requires deformylation of the N(alpha)-formylated initiator methionine before it can be hydrolyzed. The chain is Methionine aminopeptidase from Buchnera aphidicola subsp. Schizaphis graminum (strain Sg).